A 529-amino-acid chain; its full sequence is Serine/threonine-protein kinase RIO2 (529 aa).

Residues 97–273 form the Protein kinase domain; it reads VGNQIGIGKE…RDVTCVRTFF (177 aa). Lysine 123 provides a ligand contact to ATP. The Proton acceptor role is filled by aspartate 228. Disordered regions lie at residues 331-366 and 411-452; these read RNRQ…KDHE and EGYK…GHVA. Positions 337–346 are enriched in acidic residues; sequence DLGEDEDDSD. The span at 411–428 shows a compositional bias: basic and acidic residues; sequence EGYKDIELPPEDFKRPAD. Residues 429–447 show a composition bias toward acidic residues; it reads SENDDENDEDEEEGEEEDA.

It belongs to the protein kinase superfamily. RIO-type Ser/Thr kinase family. Mg(2+) is required as a cofactor. Expressed in pharynx (metacorpus and posterior bulbus). Expression is restricted to adult stage.

The catalysed reaction is L-seryl-[protein] + ATP = O-phospho-L-seryl-[protein] + ADP + H(+). It carries out the reaction L-threonyl-[protein] + ATP = O-phospho-L-threonyl-[protein] + ADP + H(+). Required for larval development. This is Serine/threonine-protein kinase RIO2 from Caenorhabditis elegans.